The sequence spans 582 residues: TRAF-type zinc finger domain-containing protein 1 (582 aa).

Ala2 carries the N-acetylalanine modification. The segment at 27–103 (IHEIHCQRNI…DLELSILKLK (77 aa)) adopts a TRAF-type zinc-finger fold. At Ser191 the chain carries Phosphoserine. The segment at 217–236 (EQERQERNRGQQPPKEGGEE) is disordered. Ser278, Ser320, Ser326, Ser327, Ser409, Ser415, Ser430, and Ser470 each carry phosphoserine. Residues 401–582 (TEGIPRLDSQ…AGDAEEEEEE (182 aa)) are disordered. 2 stretches are compositionally biased toward polar residues: residues 454-471 (PINNMTATYNQLSRSTSG) and 486-495 (LSNSDSQDIQ).

As to quaternary structure, interacts with MAVS, TICAM1, TRAF1, TRAF2, TRAF3. Interacts with TRAF6.

Negative feedback regulator that controls excessive innate immune responses. Regulates both Toll-like receptor 4 (TLR4) and DDX58/RIG1-like helicases (RLH) pathways. May inhibit the LTR pathway by direct interaction with TRAF6 and attenuation of NF-kappa-B activation. May negatively regulate the RLH pathway downstream from MAVS and upstream of NF-kappa-B and IRF3. In Homo sapiens (Human), this protein is TRAF-type zinc finger domain-containing protein 1 (TRAFD1).